Here is a 728-residue protein sequence, read N- to C-terminus: Catalase-peroxidase 1 (728 aa).

The tryptophyl-tyrosyl-methioninium (Trp-Tyr) (with M-244) cross-link spans 91 to 218 (WHSAGTYRTA…LAAVQMGLIY (128 aa)). The active-site Proton acceptor is the histidine 92. The tryptophyl-tyrosyl-methioninium (Tyr-Met) (with W-91) cross-link spans 218–244 (YVNPEGPDGNPDPVAAAHDIRETFARM). Residue histidine 259 participates in heme b binding.

Belongs to the peroxidase family. Peroxidase/catalase subfamily. Homodimer or homotetramer. It depends on heme b as a cofactor. Formation of the three residue Trp-Tyr-Met cross-link is important for the catalase, but not the peroxidase activity of the enzyme.

The enzyme catalyses H2O2 + AH2 = A + 2 H2O. It carries out the reaction 2 H2O2 = O2 + 2 H2O. Its function is as follows. Bifunctional enzyme with both catalase and broad-spectrum peroxidase activity. The sequence is that of Catalase-peroxidase 1 from Burkholderia cenocepacia (strain HI2424).